A 328-amino-acid chain; its full sequence is D-cysteine desulfhydrase (328 aa).

Lys51 is subject to N6-(pyridoxal phosphate)lysine.

It belongs to the ACC deaminase/D-cysteine desulfhydrase family. Homodimer. It depends on pyridoxal 5'-phosphate as a cofactor.

It catalyses the reaction D-cysteine + H2O = hydrogen sulfide + pyruvate + NH4(+) + H(+). In terms of biological role, catalyzes the alpha,beta-elimination reaction of D-cysteine and of several D-cysteine derivatives. It could be a defense mechanism against D-cysteine. This chain is D-cysteine desulfhydrase, found in Salmonella schwarzengrund (strain CVM19633).